The following is a 195-amino-acid chain: ATP-dependent Clp protease proteolytic subunit (195 aa).

Serine 99 (nucleophile) is an active-site residue. Residue histidine 124 is part of the active site.

This sequence belongs to the peptidase S14 family. As to quaternary structure, fourteen ClpP subunits assemble into 2 heptameric rings which stack back to back to give a disk-like structure with a central cavity, resembling the structure of eukaryotic proteasomes.

It localises to the cytoplasm. It carries out the reaction Hydrolysis of proteins to small peptides in the presence of ATP and magnesium. alpha-casein is the usual test substrate. In the absence of ATP, only oligopeptides shorter than five residues are hydrolyzed (such as succinyl-Leu-Tyr-|-NHMec, and Leu-Tyr-Leu-|-Tyr-Trp, in which cleavage of the -Tyr-|-Leu- and -Tyr-|-Trp bonds also occurs).. In terms of biological role, cleaves peptides in various proteins in a process that requires ATP hydrolysis. Has a chymotrypsin-like activity. Plays a major role in the degradation of misfolded proteins. The sequence is that of ATP-dependent Clp protease proteolytic subunit from Caldicellulosiruptor saccharolyticus (strain ATCC 43494 / DSM 8903 / Tp8T 6331).